A 101-amino-acid polypeptide reads, in one-letter code: EKLGQGQQPRQWLQPRQGQQGYYPTSPQQSGQGQQLGQGQQGYYPTSPQQSGQGQQGYDSPYHVSAEHQAASLKVAKAQQLAAQLPAMCRLEGGDALLASQ.

Polar residues predominate over residues 1-27 (EKLGQGQQPRQWLQPRQGQQGYYPTSP). Residues 1 to 65 (EKLGQGQQPR…QGYDSPYHVS (65 aa)) are disordered. The span at 41-62 (QGYYPTSPQQSGQGQQGYDSPY) shows a compositional bias: low complexity.

Belongs to the gliadin/glutenin family. As to quaternary structure, disulfide-bridge linked aggregates.

In terms of biological role, glutenins are high-molecular weight seed storage proteins of wheat endosperm. Thought to be responsible for the visco-elastic property of wheat dough. This is Glutenin, high molecular weight subunit PC256 from Triticum aestivum (Wheat).